An 821-amino-acid polypeptide reads, in one-letter code: Ent-isokaur-15-ene synthase (821 aa).

D556, D560, N701, T705, and E709 together coordinate Mg(2+). The DDXXD motif signature appears at 556–560; it reads DDFFD.

This sequence belongs to the terpene synthase family. It depends on Mg(2+) as a cofactor.

The catalysed reaction is ent-copalyl diphosphate = ent-isokaurene + diphosphate. The protein operates within secondary metabolite biosynthesis; terpenoid biosynthesis. Its function is as follows. Involved in the biosynthesis of ent-kaurene diterpenoids natural products. Catalyzes the conversion of ent-copalyl diphosphate to the phytoalexin precursor ent-isokaur-15-ene. The sequence is that of Ent-isokaur-15-ene synthase from Oryza sativa subsp. indica (Rice).